We begin with the raw amino-acid sequence, 810 residues long: Abnormal pharyngeal pumping eat-20 (810 aa).

Residues 1–20 (MTTFCRVLLIFGIYVAVCCA) form the signal peptide. The Extracellular segment spans residues 21-748 (QSVEDDVFHF…GKQSSAAASW (728 aa)). N-linked (GlcNAc...) asparagine glycosylation is found at Asn90, Asn171, and Asn232. 3 EGF-like domains span residues 220 to 257 (PPSP…DRCE), 258 to 293 (LDVC…LLCE), and 301 to 335 (VAPI…ANCN). Cystine bridges form between Cys224/Cys235, Cys229/Cys245, Cys247/Cys256, Cys261/Cys272, Cys266/Cys281, Cys283/Cys292, Cys305/Cys314, Cys309/Cys323, and Cys325/Cys334. Asn371 carries an N-linked (GlcNAc...) asparagine glycan. A compositionally biased stretch (low complexity) spans 522 to 531 (FAPTTGTQQP). Disordered regions lie at residues 522–567 (FAPT…STMQ) and 684–738 (PHPQ…HTSS). Residues 542 to 558 (DENEEEEEEETTEETEE) show a composition bias toward acidic residues. A helical membrane pass occupies residues 749–769 (IIAIIALIVLGLLLLATSLFI). Topologically, residues 770–810 (LRYIRQSRKLHGKYNPAREEHNLSAAYAMPMSHIAKEERLI) are cytoplasmic.

Highly expressed in the pharynx, circumpharyngeal cells, pharyngeal-intestinal valve and a subset of neurons in larval and embryonic stages. Also moderately expressed in the lining of the intestine, coelomocytes, labial process bundles and some hypodermal cells. In adults, it is predominantly expressed in the pharynx, the pharyngeal-intenstinal valve, some circumpharyngeal cells, m3, m4 and m6 pharyngeal muscles, and IL1, OLQ, BAG and ALN neurons. Weaker expression is observed in labial process bundles, coelomocytes, the ventral hypodermal ridge, the vulval hypodermis and the sensory rays of the adult male tail.

It localises to the membrane. Functionally, regulates pharyngeal pumping during feeding. In Caenorhabditis elegans, this protein is Abnormal pharyngeal pumping eat-20 (eat-20).